The sequence spans 463 residues: Glutamate--tRNA ligase (463 aa).

Positions 10-20 (PSPTGHLHIGG) match the 'HIGH' region motif. Residues 236-240 (KLSKR) carry the 'KMSKS' region motif. Lysine 239 lines the ATP pocket.

It belongs to the class-I aminoacyl-tRNA synthetase family. Glutamate--tRNA ligase type 1 subfamily. In terms of assembly, monomer.

It localises to the cytoplasm. It carries out the reaction tRNA(Glu) + L-glutamate + ATP = L-glutamyl-tRNA(Glu) + AMP + diphosphate. Catalyzes the attachment of glutamate to tRNA(Glu) in a two-step reaction: glutamate is first activated by ATP to form Glu-AMP and then transferred to the acceptor end of tRNA(Glu). This chain is Glutamate--tRNA ligase, found in Nitratidesulfovibrio vulgaris (strain ATCC 29579 / DSM 644 / CCUG 34227 / NCIMB 8303 / VKM B-1760 / Hildenborough) (Desulfovibrio vulgaris).